A 113-amino-acid chain; its full sequence is Colicin-E1* immunity protein (113 aa).

In terms of biological role, this protein is able to protect a cell, which harbors the plasmid pKY-1 encoding colicin E1*, against colicin E1*. The polypeptide is Colicin-E1* immunity protein (imm) (Shigella sonnei).